A 145-amino-acid polypeptide reads, in one-letter code: 3-hydroxyacyl-[acyl-carrier-protein] dehydratase FabZ (145 aa).

His49 is a catalytic residue.

Belongs to the thioester dehydratase family. FabZ subfamily.

The protein resides in the cytoplasm. It catalyses the reaction a (3R)-hydroxyacyl-[ACP] = a (2E)-enoyl-[ACP] + H2O. Functionally, involved in unsaturated fatty acids biosynthesis. Catalyzes the dehydration of short chain beta-hydroxyacyl-ACPs and long chain saturated and unsaturated beta-hydroxyacyl-ACPs. The protein is 3-hydroxyacyl-[acyl-carrier-protein] dehydratase FabZ of Rickettsia massiliae (strain Mtu5).